The primary structure comprises 103 residues: Cell division protein FtsB (103 aa).

Residues 1–3 (MGK) are Cytoplasmic-facing. A helical membrane pass occupies residues 4–21 (LTLLLLAILVWLQYSLWF). The Periplasmic segment spans residues 22–103 (GKNGIHDYTR…RAQSAGQNNR (82 aa)). A coiled-coil region spans residues 28–71 (DYTRVNDDVAALQATNAKLKARNDQLFAEIDDLNGGQEALEERA).

This sequence belongs to the FtsB family. As to quaternary structure, part of a complex composed of FtsB, FtsL and FtsQ.

The protein localises to the cell inner membrane. In terms of biological role, essential cell division protein. May link together the upstream cell division proteins, which are predominantly cytoplasmic, with the downstream cell division proteins, which are predominantly periplasmic. The polypeptide is Cell division protein FtsB (Shigella flexneri serotype 5b (strain 8401)).